The sequence spans 217 residues: ATP-dependent Clp protease proteolytic subunit (217 aa).

The active-site Nucleophile is the S121. H146 is an active-site residue.

It belongs to the peptidase S14 family. Fourteen ClpP subunits assemble into 2 heptameric rings which stack back to back to give a disk-like structure with a central cavity, resembling the structure of eukaryotic proteasomes.

It localises to the cytoplasm. The catalysed reaction is Hydrolysis of proteins to small peptides in the presence of ATP and magnesium. alpha-casein is the usual test substrate. In the absence of ATP, only oligopeptides shorter than five residues are hydrolyzed (such as succinyl-Leu-Tyr-|-NHMec, and Leu-Tyr-Leu-|-Tyr-Trp, in which cleavage of the -Tyr-|-Leu- and -Tyr-|-Trp bonds also occurs).. Its function is as follows. Cleaves peptides in various proteins in a process that requires ATP hydrolysis. Has a chymotrypsin-like activity. Plays a major role in the degradation of misfolded proteins. This Burkholderia lata (strain ATCC 17760 / DSM 23089 / LMG 22485 / NCIMB 9086 / R18194 / 383) protein is ATP-dependent Clp protease proteolytic subunit.